Consider the following 131-residue polypeptide: D-ribose pyranase (131 aa).

The Proton donor role is filled by His-20. Residues Asp-28, His-98, and 120–122 (YAN) contribute to the substrate site.

It belongs to the RbsD / FucU family. RbsD subfamily. In terms of assembly, homodecamer.

It is found in the cytoplasm. It catalyses the reaction beta-D-ribopyranose = beta-D-ribofuranose. The protein operates within carbohydrate metabolism; D-ribose degradation; D-ribose 5-phosphate from beta-D-ribopyranose: step 1/2. Its function is as follows. Catalyzes the interconversion of beta-pyran and beta-furan forms of D-ribose. This chain is D-ribose pyranase, found in Bacillus cereus (strain B4264).